The following is a 278-amino-acid chain: 4-diphosphocytidyl-2-C-methyl-D-erythritol kinase (278 aa).

The active site involves K9. An ATP-binding site is contributed by 93 to 103 (PISAGLAGGSS). D135 is a catalytic residue.

It belongs to the GHMP kinase family. IspE subfamily.

It carries out the reaction 4-CDP-2-C-methyl-D-erythritol + ATP = 4-CDP-2-C-methyl-D-erythritol 2-phosphate + ADP + H(+). It participates in isoprenoid biosynthesis; isopentenyl diphosphate biosynthesis via DXP pathway; isopentenyl diphosphate from 1-deoxy-D-xylulose 5-phosphate: step 3/6. Its function is as follows. Catalyzes the phosphorylation of the position 2 hydroxy group of 4-diphosphocytidyl-2C-methyl-D-erythritol. This chain is 4-diphosphocytidyl-2-C-methyl-D-erythritol kinase, found in Finegoldia magna (strain ATCC 29328 / DSM 20472 / WAL 2508) (Peptostreptococcus magnus).